The sequence spans 228 residues: 2,3-bisphosphoglycerate-dependent phosphoglycerate mutase (228 aa).

Substrate-binding positions include 8–15 (RHGQSQWN), 21–22 (TG), Arg-60, 87–90 (ERHY), Lys-98, 114–115 (RR), and 180–181 (GN). The Tele-phosphohistidine intermediate role is filled by His-9. The active-site Proton donor/acceptor is the Glu-87.

This sequence belongs to the phosphoglycerate mutase family. BPG-dependent PGAM subfamily. Homodimer.

The catalysed reaction is (2R)-2-phosphoglycerate = (2R)-3-phosphoglycerate. It functions in the pathway carbohydrate degradation; glycolysis; pyruvate from D-glyceraldehyde 3-phosphate: step 3/5. Its function is as follows. Catalyzes the interconversion of 2-phosphoglycerate and 3-phosphoglycerate. The sequence is that of 2,3-bisphosphoglycerate-dependent phosphoglycerate mutase from Novosphingobium aromaticivorans (strain ATCC 700278 / DSM 12444 / CCUG 56034 / CIP 105152 / NBRC 16084 / F199).